Consider the following 428-residue polypeptide: 3-phosphoshikimate 1-carboxyvinyltransferase (428 aa).

3-phosphoshikimate-binding residues include lysine 22, serine 23, and arginine 27. Residue lysine 22 participates in phosphoenolpyruvate binding. Glycine 96 and arginine 124 together coordinate phosphoenolpyruvate. Positions 169, 170, 171, 197, 313, 336, and 340 each coordinate 3-phosphoshikimate. Residue glutamine 171 coordinates phosphoenolpyruvate. Aspartate 313 functions as the Proton acceptor in the catalytic mechanism. Residues arginine 344, arginine 386, and lysine 411 each contribute to the phosphoenolpyruvate site.

This sequence belongs to the EPSP synthase family. Monomer.

The protein resides in the cytoplasm. The catalysed reaction is 3-phosphoshikimate + phosphoenolpyruvate = 5-O-(1-carboxyvinyl)-3-phosphoshikimate + phosphate. It functions in the pathway metabolic intermediate biosynthesis; chorismate biosynthesis; chorismate from D-erythrose 4-phosphate and phosphoenolpyruvate: step 6/7. Catalyzes the transfer of the enolpyruvyl moiety of phosphoenolpyruvate (PEP) to the 5-hydroxyl of shikimate-3-phosphate (S3P) to produce enolpyruvyl shikimate-3-phosphate and inorganic phosphate. The polypeptide is 3-phosphoshikimate 1-carboxyvinyltransferase (Proteus mirabilis (strain HI4320)).